A 372-amino-acid polypeptide reads, in one-letter code: MNVGGKFNEGILFLNFNQDFSCIAVGTPEGYKIFNSDPYTLYYSQSNGGAGLVEMLFSTSLVSIVGSGDGNTSQRRLLINNIKNNIPICDLNFVTAILSVKMNRKRIVVIMETKIHIYDINNMKLLETREIASNPKGLCALSPSNTNYIVYPASQNNGNILVMDVLTLETVNLIQAHKSQISALALSQDGTLLATASDKGTVIRVFALPYANKSLSFRRGSIPAIIHSMTFSLDGRYLCVSSDTGTIHIFKIDFSSSNSSSFHQAQPSSSPSGGMMGLNFGGLTSKMSSYLPEVISQVWEPSRDFAHIKIPPGIPSICALMQNNKTAMVLTADSLYMQYNFDESVGGELKLAKEFSLLMEPDLDNDVTAKIL.

WD repeat units lie at residues 176–216 (AHKS…KSLS) and 221–260 (SIPA…SNSS).

It belongs to the WD repeat PROPPIN family.

It localises to the preautophagosomal structure membrane. The protein resides in the vacuole membrane. Functionally, may be involved in cytoplasm to vacuole transport and autophagy. The protein is Autophagy-related protein 18 (atg18) of Dictyostelium discoideum (Social amoeba).